The primary structure comprises 472 residues: ATP-dependent rRNA helicase rrp3 (472 aa).

Residues Met1–Lys52 are disordered. Over residues Ala10–Asp19 the composition is skewed to basic and acidic residues. Over residues Thr20–Gln31 the composition is skewed to polar residues. Residues Lys52–Ala80 carry the Q motif motif. The Helicase ATP-binding domain occupies Ile83 to Val254. Ala96 to Thr103 lines the ATP pocket. The DEAD box motif lies at Asp202–Asp205. The Helicase C-terminal domain maps to Tyr282–Met426. A disordered region spans residues Lys444–Gly472. The span at Thr452–Arg462 shows a compositional bias: basic residues.

Belongs to the DEAD box helicase family. DDX47/RRP3 subfamily. Interacts with the SSU processome.

Its subcellular location is the nucleus. It carries out the reaction ATP + H2O = ADP + phosphate + H(+). Its function is as follows. ATP-dependent rRNA helicase required for pre-ribosomal RNA processing. Involved in the maturation of the 35S-pre-rRNA and to its cleavage to mature 18S rRNA. The polypeptide is ATP-dependent rRNA helicase rrp3 (Aspergillus fumigatus (strain ATCC MYA-4609 / CBS 101355 / FGSC A1100 / Af293) (Neosartorya fumigata)).